A 143-amino-acid polypeptide reads, in one-letter code: Large ribosomal subunit protein uL11 (143 aa).

It belongs to the universal ribosomal protein uL11 family. Part of the ribosomal stalk of the 50S ribosomal subunit. Interacts with L10 and the large rRNA to form the base of the stalk. L10 forms an elongated spine to which L12 dimers bind in a sequential fashion forming a multimeric L10(L12)X complex. In terms of processing, one or more lysine residues are methylated.

Its function is as follows. Forms part of the ribosomal stalk which helps the ribosome interact with GTP-bound translation factors. This Clavibacter michiganensis subsp. michiganensis (strain NCPPB 382) protein is Large ribosomal subunit protein uL11.